A 338-amino-acid polypeptide reads, in one-letter code: MTVRVGVIGTGMIGQDHIRRLTRVVTGAEIVAVTDIDADRAASVAGGVGARTMPSGADVIGSADVDAVLVTSWGPTHAEHVLAAIEAGKAVFCEKPLATEVEDCLRIVEAESARGKRLVQVGFMRRYDAGYREMKELVDAGGIGTPLMAHCVHRNPTVPETYHSAMAAQDTAVHEIDTLRWLLDDEIVSAQVIRPRRTSKRFEHLQDPQIMLFETESGARIDVEVFVNCQYGYDIQCEVVGESGTVRLPDPARTGLPSAGSVRAAITQDWKQRFADAFDAELQSWVDSVAHGAAGGPSAWDGYAATAICGATVEALHSGQVVPVALKDRPGLYGGNNQ.

The protein belongs to the Gfo/Idh/MocA family. In terms of assembly, homotetramer.

It catalyses the reaction myo-inositol + NAD(+) = scyllo-inosose + NADH + H(+). Functionally, involved in the oxidation of myo-inositol (MI) to 2-keto-myo-inositol (2KMI or 2-inosose). The chain is Inositol 2-dehydrogenase 3 from Saccharopolyspora erythraea (strain ATCC 11635 / DSM 40517 / JCM 4748 / NBRC 13426 / NCIMB 8594 / NRRL 2338).